Here is a 161-residue protein sequence, read N- to C-terminus: Allophycocyanin subunit alpha-B (161 aa).

Residue N71 is modified to N4-methylasparagine. C81 is a binding site for (2R,3E)-phycocyanobilin.

The protein belongs to the phycobiliprotein family. Heterohexamer of two alpha chains, one alpha-B chain and three beta chains. Post-translationally, contains one covalently linked phycocyanobilin chromophore. The chromophore is added by phycocyanobilin lyase CpcS 1.

Its subcellular location is the cellular thylakoid membrane. In terms of biological role, light-harvesting photosynthetic bile pigment-protein from the phycobiliprotein complex. Allophycocyanin has a maximum absorption at approximately 654 nanometers. This is Allophycocyanin subunit alpha-B (apcD) from Nostoc sp. (strain PCC 7120 / SAG 25.82 / UTEX 2576).